The chain runs to 299 residues: Plasmodesmata-located protein 5 (299 aa).

An N-terminal signal peptide occupies residues 1-25 (MIKTKTTSLLCFLLTAVILMNPSSS). The Extracellular portion of the chain corresponds to 26–264 (SPTDNYIYAV…NKDDNGVGKT (239 aa)). Gnk2-homologous domains are found at residues 29-135 (DNYI…NKSF) and 137-237 (GVQD…VGGS). 6 disulfides stabilise this stretch: C36/C113, C89/C98, C101/C126, C148/C215, C191/C200, and C203/C228. A helical membrane pass occupies residues 265 to 285 (LAIIIGIVTLIILLVVFLAFV). A necessary and sufficient for plasmodesmal targeting region spans residues 265 to 285 (LAIIIGIVTLIILLVVFLAFV). The Cytoplasmic portion of the chain corresponds to 286 to 299 (GKCCRKLQDEKWCK).

Belongs to the cysteine-rich repeat secretory protein family. Plasmodesmata-located proteins (PDLD) subfamily. In terms of assembly, monomer. Interacts with PDLP1. As to quaternary structure, (Microbial infection) Interacts with Grapevine fanleaf virus (GFLV) 2B-MP. Highly expressed in inflorescence nodes and rosette senescent leaves. Mostly expressed in cell wall junctions between leaf epidermal and mesophyl cells, and to a lesser extent at the cross walls between epidermal or cortex cells within the hypocotyl (at protein level). Low vascular expression in seedling and mature leaf, but high expression in senescing leaves (at protein level).

The protein resides in the cell membrane. The protein localises to the cell junction. Its subcellular location is the plasmodesma. Modulates cell-to-cell trafficking. Has a positive role in innate immunity. Required for systemic acquired resistance (SAR) which is mediated by the signaling molecules azelaic acid (AzA), glycerol-3-phosphate (G3P), and salicylic acid (SA). Negative regulator of plasmodesmata permeability triggered by SA during immune responses, through regulation of callose deposition. Delays the trafficking of Tobacco Mosaic Virus (TMV) movement protein (MP). Required for symplastic signal transport. This Arabidopsis thaliana (Mouse-ear cress) protein is Plasmodesmata-located protein 5.